An 857-amino-acid chain; its full sequence is DNA mismatch repair protein MutS (857 aa).

608–615 (GPNMSGKS) contacts ATP.

The protein belongs to the DNA mismatch repair MutS family.

Functionally, this protein is involved in the repair of mismatches in DNA. It is possible that it carries out the mismatch recognition step. This protein has a weak ATPase activity. The chain is DNA mismatch repair protein MutS from Lacticaseibacillus paracasei (strain ATCC 334 / BCRC 17002 / CCUG 31169 / CIP 107868 / KCTC 3260 / NRRL B-441) (Lactobacillus paracasei).